A 343-amino-acid chain; its full sequence is Anthranilate phosphoribosyltransferase (343 aa).

5-phospho-alpha-D-ribose 1-diphosphate is bound by residues Gly-79, Gly-82–Asp-83, Thr-87, Asn-89–Thr-92, Lys-106–Ser-114, and Ser-118. Gly-79 lines the anthranilate pocket. Ser-91 provides a ligand contact to Mg(2+). Asn-109 provides a ligand contact to anthranilate. Arg-164 lines the anthranilate pocket. Mg(2+) is bound by residues Asp-223 and Glu-224.

Belongs to the anthranilate phosphoribosyltransferase family. As to quaternary structure, homodimer. It depends on Mg(2+) as a cofactor.

It catalyses the reaction N-(5-phospho-beta-D-ribosyl)anthranilate + diphosphate = 5-phospho-alpha-D-ribose 1-diphosphate + anthranilate. It participates in amino-acid biosynthesis; L-tryptophan biosynthesis; L-tryptophan from chorismate: step 2/5. Its function is as follows. Catalyzes the transfer of the phosphoribosyl group of 5-phosphorylribose-1-pyrophosphate (PRPP) to anthranilate to yield N-(5'-phosphoribosyl)-anthranilate (PRA). The sequence is that of Anthranilate phosphoribosyltransferase from Metallosphaera sedula (strain ATCC 51363 / DSM 5348 / JCM 9185 / NBRC 15509 / TH2).